The following is a 476-amino-acid chain: Ribulose bisphosphate carboxylase large chain (476 aa).

A propeptide spanning residues 1 to 2 is cleaved from the precursor; sequence MS. At P3 the chain carries N-acetylproline. The residue at position 14 (K14) is an N6,N6,N6-trimethyllysine. Substrate is bound by residues N123 and T173. K175 acts as the Proton acceptor in catalysis. K177 contributes to the substrate binding site. K201, D203, and E204 together coordinate Mg(2+). K201 is subject to N6-carboxylysine. Catalysis depends on H294, which acts as the Proton acceptor. R295, H327, and S379 together coordinate substrate.

The protein belongs to the RuBisCO large chain family. Type I subfamily. In terms of assembly, heterohexadecamer of 8 large chains and 8 small chains; disulfide-linked. The disulfide link is formed within the large subunit homodimers. It depends on Mg(2+) as a cofactor. In terms of processing, the disulfide bond which can form in the large chain dimeric partners within the hexadecamer appears to be associated with oxidative stress and protein turnover.

The protein localises to the plastid. It localises to the chloroplast. It carries out the reaction 2 (2R)-3-phosphoglycerate + 2 H(+) = D-ribulose 1,5-bisphosphate + CO2 + H2O. The catalysed reaction is D-ribulose 1,5-bisphosphate + O2 = 2-phosphoglycolate + (2R)-3-phosphoglycerate + 2 H(+). Its function is as follows. RuBisCO catalyzes two reactions: the carboxylation of D-ribulose 1,5-bisphosphate, the primary event in carbon dioxide fixation, as well as the oxidative fragmentation of the pentose substrate in the photorespiration process. Both reactions occur simultaneously and in competition at the same active site. This chain is Ribulose bisphosphate carboxylase large chain, found in Arenaria drummondii (Drummond sandwort).